The chain runs to 558 residues: uncharacterized protein (558 aa).

The disordered stretch occupies residues N531–R558.

This is an uncharacterized protein from Saccharomyces cerevisiae (strain ATCC 204508 / S288c) (Baker's yeast).